The chain runs to 556 residues: MWPVGSSYTRACSVQRWPKRCVYWAPSPQNVLEINPHRFQESRRSAALYRKHVVESKLNLIKKELLKAELDNVVQTNLANSQAITDYLTTLEDLANILVDRAQQPASSNQGGARPQTDPHVPQPAPAIPSAPPKENTTTVVIAPGDSGYTFSTNFLREFLSGLYATSASWLPSYGPWFTAMTANAMQRRVFPKELKGTANLKNSTSLKLITEVLTTVASINVDFYTDLRNLSDFNAALCILNAYYCKTQGHPLPASREELLDNLGPKIAALVADIKGLGSDSNITFTFTFSSGQQAATIAPVNGDGRYNKDFFSNHKIFRLLVAKEVVLLPNFTNVPGATDGPDYIYALTSALFSDNIPPFGNYQLNLRSGIKGVEYLILVYLTLANAQLSKPDGRRLHLKALLGAAFEHSSKVQLFKRDEVFTFLMKEYVLPILSHNNNISTTELFPGMALAALEVGNQINFDPNKHFVNLAGTKFTKIFNVLNQKLMFKDVRELLVAKSELRVALENGLAATLNSIAPVNAVVEVIQKQFGGGDDYDRLYFLVLGCLPVTVAVV.

Residues 1 to 54 (MWPVGSSYTRACSVQRWPKRCVYWAPSPQNVLEINPHRFQESRRSAALYRKHVV) form an interaction with major capsid protein/MCP region. Residues 104–136 (QPASSNQGGARPQTDPHVPQPAPAIPSAPPKEN) form a disordered region. Positions 121 to 132 (VPQPAPAIPSAP) are enriched in pro residues.

Belongs to the herpesviridae CVC2 protein family. In terms of assembly, heterodimerizes with CVC1. Interacts with major capsid protein/MCP and triplex capsid protein 1/TRX1 at the pentamer vertices. Interacts with the large tegument protein/LTP.

It localises to the virion. The protein localises to the host nucleus. Capsid vertex-specific component that plays a role during viral DNA encapsidation, assuring correct genome cleavage and presumably stabilizing capsids that contain full-length viral genomes. Participates in the interaction between the capsid and the tegument through interaction with the large tegument protein/LTP. The sequence is that of Capsid vertex component 2 from Connochaetes taurinus (Blue wildebeest).